Consider the following 192-residue polypeptide: Amelogenin, Y isoform (192 aa).

The first 16 residues, M1–S16, serve as a signal peptide directing secretion. Positions Q73–D192 are disordered. The span at P87 to P105 shows a compositional bias: low complexity. The segment covering H108–Q117 has biased composition (polar residues). The span at P132–P173 shows a compositional bias: pro residues.

This sequence belongs to the amelogenin family.

Its subcellular location is the secreted. It is found in the extracellular space. The protein localises to the extracellular matrix. In terms of biological role, plays a role in the biomineralization of teeth. Seems to regulate the formation of crystallites during the secretory stage of tooth enamel development. Thought to play a major role in the structural organization and mineralization of developing enamel. In Bos taurus (Bovine), this protein is Amelogenin, Y isoform (AMELY).